Reading from the N-terminus, the 447-residue chain is Phosphoglucosamine mutase (447 aa).

Residue Ser-103 is the Phosphoserine intermediate of the active site. Positions 103, 242, 244, and 246 each coordinate Mg(2+). Residue Ser-103 is modified to Phosphoserine.

This sequence belongs to the phosphohexose mutase family. Mg(2+) is required as a cofactor. Activated by phosphorylation.

The enzyme catalyses alpha-D-glucosamine 1-phosphate = D-glucosamine 6-phosphate. Functionally, catalyzes the conversion of glucosamine-6-phosphate to glucosamine-1-phosphate. The sequence is that of Phosphoglucosamine mutase from Cereibacter sphaeroides (strain ATCC 17025 / ATH 2.4.3) (Rhodobacter sphaeroides).